The chain runs to 883 residues: DNA mismatch repair protein MutS (883 aa).

The interval 1–25 (MSDSVAPDVPVIREGKNPAQHRDRT) is disordered. Over residues 11–25 (VIREGKNPAQHRDRT) the composition is skewed to basic and acidic residues. Residue 664–671 (GPNASGKS) participates in ATP binding. The tract at residues 857–883 (RKGNTQPRARKSSAETEAKTQQFELPF) is disordered.

This sequence belongs to the DNA mismatch repair MutS family.

Its function is as follows. This protein is involved in the repair of mismatches in DNA. It is possible that it carries out the mismatch recognition step. This protein has a weak ATPase activity. This chain is DNA mismatch repair protein MutS, found in Acaryochloris marina (strain MBIC 11017).